A 478-amino-acid polypeptide reads, in one-letter code: tRNA (adenine(58)-N(1))-methyltransferase non-catalytic subunit TRM6 (478 aa).

The segment at 456 to 478 (SENATAADSSEKLAEHGAKKQKI) is disordered. Positions 464–478 (SSEKLAEHGAKKQKI) are enriched in basic and acidic residues.

Belongs to the TRM6/GCD10 family. As to quaternary structure, heterotetramer; composed of two copies of TRM6/GCD10 and two copies of TRM61/GCD14.

It localises to the nucleus. Its function is as follows. Substrate-binding subunit of tRNA (adenine-N(1)-)-methyltransferase, which catalyzes the formation of N(1)-methyladenine at position 58 (m1A58) in initiator methionyl-tRNA. Also required for repression of GCN4 mRNA translation by the upstream open reading frames (uORFs) under conditions of amino acid sufficiency. The protein is tRNA (adenine(58)-N(1))-methyltransferase non-catalytic subunit TRM6 (GCD10) of Saccharomyces cerevisiae (strain ATCC 204508 / S288c) (Baker's yeast).